The following is a 747-amino-acid chain: MFNEITKSVTWNGKVLELSTGKIARQADGAVTVKMGNSVLLCAAVVANKAKEGIGFFPLTINYREMAYAAGKIPGGFFKREGKASDREVLVSRLIDRPIRPLFHPAFVNETHVTCTVLSYDPETPVDILAIIGASAALSLSPAPYLEIVAASKVGLIDGEFVLNPTLELLKTSQLDLVVAGTADSVMMVESEANLLSEEQMLEAVKFGFESFQPIIKIIKELAKEAKKPKFQMQDLYPASLKKEIEKLFVKEIKQAFAIKSKQERSTNLDLIHEKVLTHFVSDIENKKYSNYQIESALKSIESDILRNEILEKNRRIDGRSTTDIRQIACEIGLLPSAHGSALFTRGETQSLVSTTFGTSLDEQLVDSLDGEYKERFMLDYIFPPYSVNEAMPMKAPSRREVGHGKLAWRAINPILPNKVQFPYAIRVVAETTESNGSSSMATVCSSSLALMYAGVPIKAPVAGIAMGLVKEGKKFAVLSDILGDEDYFGDMDFKVAGTSEGITALQMDIKISGVDFKIMKAALEQARLGRLHILDQMNKIISKPNSKLGKNVPSTTTIKIDKDKIRDVIGPGGKVIKEICETSDAKIDISDDGTVSVYASDRDKLKVALDKIKAIAVEPEIGEIFNGTVMKVLDSGAFINYLGTKDGFVHISEIAEERIETVGSVLKQGDIVKVKLIGFDNKGKAKLTIKNADKDKSSNNPKQKNNVNNSKENSEPERRDSSKKRAWNEDNNSDTTEVITERKYFN.

Mg(2+) is bound by residues Asp-487 and Asp-493. The region spanning 554–613 (PSTTTIKIDKDKIRDVIGPGGKVIKEICETSDAKIDISDDGTVSVYASDRDKLKVALDKI) is the KH domain. The region spanning 623–691 (GEIFNGTVMK…NKGKAKLTIK (69 aa)) is the S1 motif domain. The tract at residues 691–747 (KNADKDKSSNNPKQKNNVNNSKENSEPERRDSSKKRAWNEDNNSDTTEVITERKYFN) is disordered. A compositionally biased stretch (low complexity) spans 699–712 (SNNPKQKNNVNNSK). Over residues 730 to 739 (EDNNSDTTEV) the composition is skewed to polar residues.

The protein belongs to the polyribonucleotide nucleotidyltransferase family. Mg(2+) serves as cofactor.

The protein localises to the cytoplasm. It catalyses the reaction RNA(n+1) + phosphate = RNA(n) + a ribonucleoside 5'-diphosphate. Its function is as follows. Involved in mRNA degradation. Catalyzes the phosphorolysis of single-stranded polyribonucleotides processively in the 3'- to 5'-direction. The chain is Polyribonucleotide nucleotidyltransferase from Rickettsia akari (strain Hartford).